The sequence spans 125 residues: NADH-ubiquinone oxidoreductase chain 1 (125 aa).

3 consecutive transmembrane segments (helical) span residues 5-25 (IFAF…VAFL), 74-94 (YLFF…WNFM), and 105-125 (LSLL…LGSG).

The protein belongs to the complex I subunit 1 family.

Its subcellular location is the mitochondrion inner membrane. The enzyme catalyses a ubiquinone + NADH + 5 H(+)(in) = a ubiquinol + NAD(+) + 4 H(+)(out). Its function is as follows. Core subunit of the mitochondrial membrane respiratory chain NADH dehydrogenase (Complex I) that is believed to belong to the minimal assembly required for catalysis. Complex I functions in the transfer of electrons from NADH to the respiratory chain. The immediate electron acceptor for the enzyme is believed to be ubiquinone. The protein is NADH-ubiquinone oxidoreductase chain 1 (ND1) of Arbacia lixula (Black urchin).